The following is a 505-amino-acid chain: Putative F-box protein At1g58310 (505 aa).

Residues 7–55 (RDIISGLPDSLLCHILSFLNTKEAASTSVLAKKWRYLFASVPNLDFDDS) form the F-box domain.

This Arabidopsis thaliana (Mouse-ear cress) protein is Putative F-box protein At1g58310.